A 232-amino-acid polypeptide reads, in one-letter code: T-cell surface glycoprotein CD1b-3 (232 aa).

Over 1–201 the chain is Extracellular; sequence GLQEFQFEYP…LYWGHPMYIG (201 aa). Cystine bridges form between cysteine 19–cysteine 83, cysteine 48–cysteine 62, and cysteine 123–cysteine 178. A glycan (N-linked (GlcNAc...) asparagine) is linked at asparagine 45. The region spanning 84-194 is the Ig-like domain; sequence PRYLLGVLDA…LGDQDIILYW (111 aa). A helical membrane pass occupies residues 202–222; the sequence is LIFVAIIVPSLILLICLALWF. Residues 223-232 are Cytoplasmic-facing; that stretch reads WRRWSYQTVL.

Heterodimer with B2M (beta-2-microglobulin). Interacts with saposin C.

It is found in the cell membrane. It localises to the endosome membrane. The protein localises to the lysosome membrane. Its function is as follows. Antigen-presenting protein that binds self and non-self lipid and glycolipid antigens and presents them to T-cell receptors on natural killer T-cells. The chain is T-cell surface glycoprotein CD1b-3 from Ovis aries (Sheep).